Consider the following 429-residue polypeptide: Putative GMP synthase [glutamine-hydrolyzing] (429 aa).

In terms of domain architecture, Glutamine amidotransferase type-1 spans 10–118; sequence TIFILDFGSQ…GYTPIHLYPC (109 aa). The active-site Nucleophile is the Cys-87. Residues 119–304 enclose the GMPS ATP-PPase domain; sequence ELFKHIVDCE…LGLSSYLLDR (186 aa). Active-site residues include His-176 and Glu-178.

In terms of assembly, homodimer.

The catalysed reaction is XMP + L-glutamine + ATP + H2O = GMP + L-glutamate + AMP + diphosphate + 2 H(+). Its pathway is purine metabolism; GMP biosynthesis; GMP from XMP (L-Gln route): step 1/1. Catalyzes the synthesis of GMP from XMP. The sequence is that of Putative GMP synthase [glutamine-hydrolyzing] (guaA) from Chlamydia pneumoniae (Chlamydophila pneumoniae).